Reading from the N-terminus, the 369-residue chain is Large ribosomal subunit protein uL4 (369 aa).

Residue Thr2 is modified to N-acetylthreonine.

Belongs to the universal ribosomal protein uL4 family.

The polypeptide is Large ribosomal subunit protein uL4 (rpl4) (Dictyostelium discoideum (Social amoeba)).